The chain runs to 98 residues: Small ribosomal subunit protein uS17 (98 aa).

The disordered stretch occupies residues 1-21; it reads MADQKGPKYTPAAEKPRGRRK. Lys96 participates in a covalent cross-link: Isoglutamyl lysine isopeptide (Lys-Gln) (interchain with Q-Cter in protein Pup).

It belongs to the universal ribosomal protein uS17 family. In terms of assembly, part of the 30S ribosomal subunit.

Functionally, one of the primary rRNA binding proteins, it binds specifically to the 5'-end of 16S ribosomal RNA. This chain is Small ribosomal subunit protein uS17 (rpsQ), found in Mycolicibacterium smegmatis (strain ATCC 700084 / mc(2)155) (Mycobacterium smegmatis).